The sequence spans 676 residues: MACPFFRRADSLTRQPSVIAEPGGHWALEDEELSDDALTLTHLQMAIQLLTAPSNEDLNTAVTSLVAKYRQNWPNIHKLKLDPQTFKSCANYDYLADIQELLLKMDEASASEILVLLGEELITCCCTGIIERAFRCLGTDLQEFLGSLDGVYDVLKLQEEDVTDTGFVCAGEGELIFTSERPVIAWLLLGSLKALTRMLYKVDVNIKIEPVEGDARRYRYLFSLVKDNSQTMLMGRPTSVSKTIPETVQRSNSSNASDLQMNSSSFCKMFPWHFIMNEQLELVQLGRGFSKLYKPYMADFGCQATTYFDFKRPKGLTMKFRDIVRRTYTPFLIGLNNPPGAVDFPAIGLEIKGQMVHCPESNSLLFIGSPFLDGLDGLTCNGLFISDIPLHDATREVILVGEQARAQDGLRRRMDKIKNSIEEANSAVTKERKKNVSLLHLIFPAEIAEKLWLGSSIDAKTYPDVTILFSDIVGFTSICSRATPFMVISMLEGLYKDFDEFCDFFDVYKVETIGDAYCVASGLHRASIYDAHKVAWMALKMIDACSKHITHDGEQIKMRIGLHTGTVLAGVVGRKMPRYCLFGHSVTIANKFESGSEALKINVSPTTKDWLTKHEGFEFELQPRDPSFLPKEFPNPGGTETCYFLESFRNPALDSELPLVEHINVSMKTISEGGDA.

The Guanylate cyclase domain occupies 466–593 (TILFSDIVGF…HSVTIANKFE (128 aa)).

Belongs to the adenylyl cyclase class-4/guanylyl cyclase family. As to quaternary structure, heterodimer. Head, where it is preferentially expressed in the CNS and the retina. Not found in bodies.

It localises to the cytoplasm. The catalysed reaction is GTP = 3',5'-cyclic GMP + diphosphate. Functionally, may have a role in phototransduction. Catalyzes the conversion of GTP to cGMP, a common second messenger that is utilized in a wide variety of cells and signal transduction pathways. A second subunit is required for enzyme activity. The chain is Head-specific guanylate cyclase (Gycalpha99B) from Drosophila melanogaster (Fruit fly).